The primary structure comprises 943 residues: Isoleucine--tRNA ligase (943 aa).

The 'HIGH' region signature appears at 58–68; the sequence is PYANGSIHIGH. Glu567 lines the L-isoleucyl-5'-AMP pocket. Positions 608 to 612 match the 'KMSKS' region motif; sequence KMSKS. Lys611 contacts ATP. The Zn(2+) site is built by Cys906, Cys909, Cys926, and Cys929.

The protein belongs to the class-I aminoacyl-tRNA synthetase family. IleS type 1 subfamily. As to quaternary structure, monomer. It depends on Zn(2+) as a cofactor.

It is found in the cytoplasm. The catalysed reaction is tRNA(Ile) + L-isoleucine + ATP = L-isoleucyl-tRNA(Ile) + AMP + diphosphate. Catalyzes the attachment of isoleucine to tRNA(Ile). As IleRS can inadvertently accommodate and process structurally similar amino acids such as valine, to avoid such errors it has two additional distinct tRNA(Ile)-dependent editing activities. One activity is designated as 'pretransfer' editing and involves the hydrolysis of activated Val-AMP. The other activity is designated 'posttransfer' editing and involves deacylation of mischarged Val-tRNA(Ile). The polypeptide is Isoleucine--tRNA ligase (Ectopseudomonas mendocina (strain ymp) (Pseudomonas mendocina)).